Consider the following 389-residue polypeptide: Choline/ethanolaminephosphotransferase 2 (389 aa).

8 helical membrane-spanning segments follow: residues 49 to 69, 141 to 161, 176 to 196, 220 to 240, 252 to 272, 286 to 306, 321 to 338, and 350 to 370; these read MITL…YIYS, TFWF…EHYF, GLAL…EWWA, IILF…NTSN, MLLA…VLIW, HLVV…MILA, MSLL…TARL, and VLLG…TSVI.

Belongs to the CDP-alcohol phosphatidyltransferase class-I family. Requires Mg(2+) as cofactor. The cofactor is Mn(2+).

The protein localises to the membrane. It catalyses the reaction CDP-ethanolamine + a 1,2-diacyl-sn-glycerol = a 1,2-diacyl-sn-glycero-3-phosphoethanolamine + CMP + H(+). The catalysed reaction is CDP-choline + a 1,2-diacyl-sn-glycerol = a 1,2-diacyl-sn-glycero-3-phosphocholine + CMP + H(+). The protein operates within phospholipid metabolism; phosphatidylethanolamine biosynthesis; phosphatidylethanolamine from ethanolamine: step 3/3. It functions in the pathway phospholipid metabolism; phosphatidylcholine biosynthesis; phosphatidylcholine from phosphocholine: step 2/2. Its function is as follows. Catalyzes both phosphatidylcholine and phosphatidylethanolamine biosynthesis from CDP-choline and CDP-ethanolamine, respectively. Has a higher cholinephosphotransferase activity than ethanolaminephosphotransferase activity. This Arabidopsis thaliana (Mouse-ear cress) protein is Choline/ethanolaminephosphotransferase 2 (AAPT2).